We begin with the raw amino-acid sequence, 1132 residues long: Protein sel-1 homolog 3 (1132 aa).

The tract at residues 1-24 (MQRRGAGLGWPRQQQQQPPPLAVG) is disordered. 3 N-linked (GlcNAc...) asparagine glycosylation sites follow: asparagine 201, asparagine 382, and asparagine 527. 7 Sel1-like repeats span residues 575–609 (YLAVFYETGLNVPRDQLQGMLYSLVGGQGSERLSS), 611–647 (NLGYKHYQGIDNYPLDWELSYAYYSNIATKTPLDQHT), 694–730 (RLAQMLFWGQQGVAKNPEAAIEWYAKGALETEDPALI), 732–767 (DYAIVLFKGQGVKKNRRLALELMKKAASKGLHQAVN), 768–800 (GLGWYYHKFKKNYAKAAKYWLKAEEMGNPDASY), 801–839 (NLGVLHLDGIFPGVPGRNQTLAGEYFHKAAQGGHMEGTL), and 840–877 (WCSLYYITGNLETFPRDPEKAVVWAKHVAEKNGYLGHV). Position 608 is a phosphoserine (serine 608). An N-linked (GlcNAc...) asparagine glycan is attached at asparagine 937. Residues 952–988 (KMGDLYYYGHQNQSQDLELSVQMYAQAALDGDSQGFF) form a Sel1-like 8 repeat. The chain crosses the membrane as a helical span at residues 1057–1077 (ILHSALIYFLGTFLLSILIAW). The disordered stretch occupies residues 1087–1132 (ASDPPPRPSQASPDTATSTASPAVTPAADASDQDQPTVTNNPEPRG). A compositionally biased stretch (low complexity) spans 1097 to 1116 (ASPDTATSTASPAVTPAADA). Residues 1119–1132 (QDQPTVTNNPEPRG) are compositionally biased toward polar residues.

Its subcellular location is the membrane. The polypeptide is Protein sel-1 homolog 3 (SEL1L3) (Homo sapiens (Human)).